Reading from the N-terminus, the 223-residue chain is Ribose-5-phosphate isomerase A (223 aa).

Substrate contacts are provided by residues threonine 32–threonine 35, aspartate 85–aspartate 88, and lysine 98–glycine 101. Glutamate 107 acts as the Proton acceptor in catalysis. Substrate is bound at residue lysine 125.

The protein belongs to the ribose 5-phosphate isomerase family. In terms of assembly, homodimer.

It carries out the reaction aldehydo-D-ribose 5-phosphate = D-ribulose 5-phosphate. Its pathway is carbohydrate degradation; pentose phosphate pathway; D-ribose 5-phosphate from D-ribulose 5-phosphate (non-oxidative stage): step 1/1. Functionally, catalyzes the reversible conversion of ribose-5-phosphate to ribulose 5-phosphate. This Pseudomonas savastanoi pv. phaseolicola (strain 1448A / Race 6) (Pseudomonas syringae pv. phaseolicola (strain 1448A / Race 6)) protein is Ribose-5-phosphate isomerase A.